A 211-amino-acid chain; its full sequence is Envelope glycoprotein (211 aa).

Residues 1-151 (QFKRRAKYKR…FNKSPWFTTL (151 aa)) lie on the Extracellular side of the membrane. Residues 13–33 (VSLTLALLLGGLTMGGIAAGV) form a fusion peptide region. Coiled coils occupy residues 41-90 (VATQ…LLFL) and 100-136 (KEECCFYADHTGLVRDSMAKLRERLSQRQKLFESQQG). The tract at residues 79–95 (LQNRRGLDLLFLKEGGL) is immunosuppression. Positions 96 to 104 (CAALKEECC) match the CX6CC motif. A helical membrane pass occupies residues 152–172 (ISTIMGPLIILLLILLFGPCI). Cysteine 171 is lipidated: S-palmitoyl cysteine; by host. Over 173–211 (LNRLVQFIKDRISVVQALVLTQQYHQLKSIDPEKVESRE) the chain is Cytoplasmic. The short motif at 196 to 199 (YHQL) is the YXXL motif; contains endocytosis signal element.

As to quaternary structure, the mature envelope protein (Env) consists of a trimer of SU-TM heterodimers attached by a labile interchain disulfide bond. In terms of processing, specific enzymatic cleavages in vivo yield mature proteins. Envelope glycoproteins are synthesized as an inactive precursor that is N-glycosylated and processed likely by host cell furin or by a furin-like protease in the Golgi to yield the mature SU and TM proteins. The cleavage site between SU and TM requires the minimal sequence [KR]-X-[KR]-R. The R-peptide is released from the C-terminus of the cytoplasmic tail of the TM protein upon particle formation as a result of proteolytic cleavage by the viral protease. Cleavage of this peptide is required for TM to become fusogenic. Post-translationally, the CXXC motif is highly conserved across a broad range of retroviral envelope proteins. It is thought to participate in the formation of a labile disulfide bond possibly with the CX6CC motif present in the transmembrane protein. Isomerization of the intersubunit disulfide bond to an SU intrachain disulfide bond is thought to occur upon receptor recognition in order to allow membrane fusion. The transmembrane protein is palmitoylated. In terms of processing, the R-peptide is palmitoylated.

It localises to the virion membrane. The protein localises to the host cell membrane. Functionally, the surface protein (SU) attaches the virus to the host cell by binding to its receptor. This interaction triggers the refolding of the transmembrane protein (TM) and is thought to activate its fusogenic potential by unmasking its fusion peptide. Fusion occurs at the host cell plasma membrane. Its function is as follows. The transmembrane protein (TM) acts as a class I viral fusion protein. Under the current model, the protein has at least 3 conformational states: pre-fusion native state, pre-hairpin intermediate state, and post-fusion hairpin state. During viral and target cell membrane fusion, the coiled coil regions (heptad repeats) assume a trimer-of-hairpins structure, positioning the fusion peptide in close proximity to the C-terminal region of the ectodomain. The formation of this structure appears to drive apposition and subsequent fusion of viral and target cell membranes. Membranes fusion leads to delivery of the nucleocapsid into the cytoplasm. This chain is Envelope glycoprotein (env), found in Mus musculus (Mouse).